A 238-amino-acid polypeptide reads, in one-letter code: 1-(5-phosphoribosyl)-5-[(5-phosphoribosylamino)methylideneamino] imidazole-4-carboxamide isomerase (238 aa).

The active-site Proton acceptor is aspartate 8. The Proton donor role is filled by aspartate 129.

Belongs to the HisA/HisF family.

The protein resides in the cytoplasm. The catalysed reaction is 1-(5-phospho-beta-D-ribosyl)-5-[(5-phospho-beta-D-ribosylamino)methylideneamino]imidazole-4-carboxamide = 5-[(5-phospho-1-deoxy-D-ribulos-1-ylimino)methylamino]-1-(5-phospho-beta-D-ribosyl)imidazole-4-carboxamide. The protein operates within amino-acid biosynthesis; L-histidine biosynthesis; L-histidine from 5-phospho-alpha-D-ribose 1-diphosphate: step 4/9. This Lacticaseibacillus casei (strain BL23) (Lactobacillus casei) protein is 1-(5-phosphoribosyl)-5-[(5-phosphoribosylamino)methylideneamino] imidazole-4-carboxamide isomerase.